Reading from the N-terminus, the 461-residue chain is Nucleobindin-1 (461 aa).

The signal sequence occupies residues 1-26 (MPPSGPRGTLLLLPLLLLLLLRAVLA). Residues 42 to 51 (TESPDTGLYY) are O-glycosylated at one site. Ser-86 carries the post-translational modification Phosphoserine; by FAM20C. Thr-148 carries the post-translational modification Phosphothreonine; by FAM20C. Residues 150 to 218 (EARDLELLIQ…QQRRHREHPK (69 aa)) are a coiled coil. Residues 172–218 (HHEEFKRYEMLKEHERRRYLESLGEEQRKEAERKLEEQQRRHREHPK) mediate DNA binding. The span at 193-210 (SLGEEQRKEAERKLEEQQ) shows a compositional bias: basic and acidic residues. Positions 193–221 (SLGEEQRKEAERKLEEQQRRHREHPKVNV) are disordered. Residues 228–321 (LKEVWEELDG…VTLEEFLAST (94 aa)) are binds to GNAI2 and GNAI3. 2 EF-hand domains span residues 240-275 (PNRF…ELEK) and 292-327 (ERLR…KEFG). Residues Asp-253, Asn-255, Asp-257, Glu-264, Asp-305, Asn-307, Asp-309, and Glu-316 each contribute to the Ca(2+) site. Residues 303–333 (NVDTNQDRLVTLEEFLASTQRKEFGDTGEGW) carry the GBA motif. The stretch at 341-407 (AYTEEELRRF…QRKQQQQQQQ (67 aa)) forms a coiled coil. A disordered region spans residues 368–461 (LSQETEALGR…LPEVEVPQHL (94 aa)). Residue Ser-369 is modified to Phosphoserine; by FAM20C. The span at 437–461 (DQKEVDTSEKKLLERLPEVEVPQHL) shows a compositional bias: basic and acidic residues.

Belongs to the nucleobindin family. As to quaternary structure, interacts (via GBA motif) with guanine nucleotide-binding protein G(i) alpha subunits GNAI1, GNAI2 and GNAI3 with higher affinity for GNAI1 and GNAI3 than for GNAI2. Preferentially interacts with inactive rather than active GNAI3. Interaction with GNAI3 is inhibited when NUCB1 binds calcium, probably due to a conformational change which renders the GBA motif inaccessible. Post-translationally, O-glycosylated. In terms of tissue distribution, expressed both in fetal and adult heart, lung, liver, kidney and brain, and in adult skeletal muscle, placenta and pancreas.

Its subcellular location is the golgi apparatus. It is found in the cis-Golgi network membrane. The protein resides in the cytoplasm. The protein localises to the secreted. In terms of biological role, major calcium-binding protein of the Golgi which may have a role in calcium homeostasis. Acts as a non-receptor guanine nucleotide exchange factor which binds to and activates alpha subunits of guanine nucleotide-binding proteins (G proteins). The protein is Nucleobindin-1 (NUCB1) of Homo sapiens (Human).